The following is a 476-amino-acid chain: Chromosomal replication initiator protein DnaA (476 aa).

Residues Met-1–Arg-75 are domain I, interacts with DnaA modulators. The interval Arg-75–Thr-139 is domain II. A disordered region spans residues Phe-110–Leu-141. Positions Ala-120–Pro-138 are enriched in basic and acidic residues. The interval Arg-140–Ser-356 is domain III, AAA+ region. Gly-184, Gly-186, Lys-187, and Thr-188 together coordinate ATP. The domain IV, binds dsDNA stretch occupies residues Arg-357–Gly-476.

It belongs to the DnaA family. In terms of assembly, oligomerizes as a right-handed, spiral filament on DNA at oriC.

The protein resides in the cytoplasm. In terms of biological role, plays an essential role in the initiation and regulation of chromosomal replication. ATP-DnaA binds to the origin of replication (oriC) to initiate formation of the DNA replication initiation complex once per cell cycle. Binds the DnaA box (a 9 base pair repeat at the origin) and separates the double-stranded (ds)DNA. Forms a right-handed helical filament on oriC DNA; dsDNA binds to the exterior of the filament while single-stranded (ss)DNA is stabiized in the filament's interior. The ATP-DnaA-oriC complex binds and stabilizes one strand of the AT-rich DNA unwinding element (DUE), permitting loading of DNA polymerase. After initiation quickly degrades to an ADP-DnaA complex that is not apt for DNA replication. Binds acidic phospholipids. The chain is Chromosomal replication initiator protein DnaA from Nitrosospira multiformis (strain ATCC 25196 / NCIMB 11849 / C 71).